The chain runs to 235 residues: Transmembrane emp24 domain-containing protein 9 (235 aa).

The first 37 residues, 1 to 37, serve as a signal peptide directing secretion; sequence MAVELGVLLVRPRPGTGLGRVMRTLLLVLWLATRGSA. Over 38-202 the chain is Lumenal; that stretch reads LYFHIGETEK…RQTSESTNQR (165 aa). The GOLD domain occupies 47–145; that stretch reads KKCFIEEIPD…MLRVHLDIQV (99 aa). The tract at residues 121-160 is required for interaction with STX17; sequence CLHSNSTKFSLFAGGMLRVHLDIQVGEHANDYAEIAAKDK. An N-linked (GlcNAc...) asparagine glycan is attached at N125. Residues 154-184 adopt a coiled-coil conformation; sequence EIAAKDKLSELQLRVRQLVEQVEQIQKEQNY. K160 carries the N6-acetyllysine modification. Residues 203–222 traverse the membrane as a helical segment; it reads VLWWSILQTLILVAIGVWQM. Topologically, residues 223–235 are cytoplasmic; that stretch reads RHLKSFFEAKKLV. Positions 228-229 match the COPII vesicle coat-binding motif; sequence FF. The short motif at 228–235 is the COPI vesicle coat-binding element; the sequence is FFEAKKLV.

The protein belongs to the EMP24/GP25L family. Monomer and homodimer in endoplasmic reticulum. Predominantly monomeric and to lesser extent homodimeric in endoplasmic reticulum-Golgi intermediate compartment and cis-Golgi network. Probably oligomerizes with other members of the EMP24/GP25L family such as TMED2, TMED7 and TMED10. Interacts with TMED5. Interacts (via C-terminus) with COPG1; the interaction involves dimeric TMED9. Interacts with PTPN2 and SPAST. Interacts with STX17; the interaction is direct. Post-translationally, N-linked glycosylated containing high mannose.

It is found in the endoplasmic reticulum membrane. The protein localises to the golgi apparatus. It localises to the cis-Golgi network membrane. The protein resides in the endoplasmic reticulum-Golgi intermediate compartment membrane. Its subcellular location is the trans-Golgi network membrane. Its function is as follows. Appears to be involved in vesicular protein trafficking, mainly in the early secretory pathway. In COPI vesicle-mediated retrograde transport involved in the coatomer recruitment to membranes of the early secretory pathway. Increases coatomer-dependent activity of ARFGAP2. Thought to play a crucial role in the specific retention of p24 complexes in cis-Golgi membranes; specifically contributes to the coupled localization of TMED2 and TMED10 in the cis-Golgi network. May be involved in organization of intracellular membranes, such as of the ER-Golgi intermediate compartment and the Golgi apparatus. Involved in ER localization of PTPN2 isoform PTPB. In Homo sapiens (Human), this protein is Transmembrane emp24 domain-containing protein 9 (TMED9).